Consider the following 473-residue polypeptide: Probable acid phosphatase DDB_G0284755 (473 aa).

The active-site Nucleophile is the His94. Asp359 acts as the Proton donor in catalysis.

This sequence belongs to the histidine acid phosphatase family.

It carries out the reaction a phosphate monoester + H2O = an alcohol + phosphate. This chain is Probable acid phosphatase DDB_G0284755, found in Dictyostelium discoideum (Social amoeba).